A 694-amino-acid chain; its full sequence is Elongation factor G (694 aa).

Positions 8-282 (DRLRNIGIMA…AIVDYLPSPL (275 aa)) constitute a tr-type G domain. Residues 17–24 (AHIDAGKT), 81–85 (DTPGH), and 135–138 (NKMD) each bind GTP. The disordered stretch occupies residues 284–303 (IPPVQGTDPETGEPAERKAD).

The protein belongs to the TRAFAC class translation factor GTPase superfamily. Classic translation factor GTPase family. EF-G/EF-2 subfamily.

The protein resides in the cytoplasm. Functionally, catalyzes the GTP-dependent ribosomal translocation step during translation elongation. During this step, the ribosome changes from the pre-translocational (PRE) to the post-translocational (POST) state as the newly formed A-site-bound peptidyl-tRNA and P-site-bound deacylated tRNA move to the P and E sites, respectively. Catalyzes the coordinated movement of the two tRNA molecules, the mRNA and conformational changes in the ribosome. The sequence is that of Elongation factor G from Symbiobacterium thermophilum (strain DSM 24528 / JCM 14929 / IAM 14863 / T).